The chain runs to 630 residues: MQNDSNKNTLMFLVCAFAILIGYQFLVMGPQQKQREAELRAKKAAEAQVAVQPGMTIGADGTPQPLKLSRDEAKAQSPRIAVDTPALSGSIALKGARIDDLWLKRYTQTADKNSPPVELFRPEGAEHAWFADFGWAGIAGMTGLPTPQTVWTAAPGQVLRPTTPVVLTYDNGQGLVFTRTISVDADAMFTVADTVRNQGGAAVALAPYASVQRQGIPTEGPHGLGKTQIVYEGGIGVLGGIDGVEGGKYILQNKAKYPKWKKDKPLQDNLQSKGGWIGMTDKYWLAALVPQQSEMIKGRFQVKPVSGVDVYESAFTGAPKSLAAGATVTNTTRLFAGAKTVPLLTRYQYGGKPVVWWEFWNRPANVIPNFDKAVDWGMFEVITRPIFNVLEIFYKMVGNFGVAIMLLTVALKLILFPLADKSYESMAKMKKIAPEVEKLKVKNKDDPAKQQQEMMALYAKEKINPMMGCVPMLIQIPIFYSLYKVLTVTIEMRHAPFFGWITDLSARDPSTFMNLFGLIHWDPATAPLIGAFLSGPLHIGVWPLLYGFTMWLTTAMNPPAGDPIQQKIFQFFPIVFTFTLSQFAVGLVIYWCWSNVLTILQQYIIMHRYKVDNPIDQLVNRLRGKTVEAT.

The next 5 helical transmembrane spans lie at 10-30, 396-416, 470-490, 528-548, and 571-591; these read LMFL…VMGP, MVGN…LILF, VPML…TVTI, LIGA…LYGF, and FFPI…VIYW.

Belongs to the OXA1/ALB3/YidC family. Type 1 subfamily. Interacts with the Sec translocase complex via SecD. Specifically interacts with transmembrane segments of nascent integral membrane proteins during membrane integration.

Its subcellular location is the cell inner membrane. Required for the insertion and/or proper folding and/or complex formation of integral membrane proteins into the membrane. Involved in integration of membrane proteins that insert both dependently and independently of the Sec translocase complex, as well as at least some lipoproteins. Aids folding of multispanning membrane proteins. This is Membrane protein insertase YidC from Caulobacter sp. (strain K31).